The chain runs to 805 residues: Pentatricopeptide repeat-containing protein At4g01570 (805 aa).

16 PPR repeats span residues 91-125 (SATAYSQIFRTVCRTGLLGEVPDLLGSMKEDGVNL), 126-160 (DQTMAKILLDSLIRSGKFESALGVLDYMEELGDCL), 161-196 (NPSVYDSVLIALVKKHELRLALSILFKLLEASDNHS), 211-241 (GTVAVNELLVGLRRADMRSEFKRVFEKLKGM), 247-277 (DTWSYNICIHGFGCWGDLDAALSLFKEMKER), 288-322 (DICTYNSLIHVLCLFGKAKDALIVWDELKVSGHEP), 323-357 (DNSTYRILIQGCCKSYRMDDAMRIYGEMQYNGFVP), 358-392 (DTIVYNCLLDGTLKARKVTEACQLFEKMVQEGVRA), 393-427 (SCWTYNILIDGLFRNGRAEAGFTLFCDLKKKGQFV), 428-462 (DAITFSIVGLQLCREGKLEGAVKLVEEMETRGFSV), 463-497 (DLVTISSLLIGFHKQGRWDWKEKLMKHIREGNLVP), 593-627 (DVDMMNTFLSIYLSKGDLSLACKLFEIFNGMGVTD), 629-663 (TSYTYNSMMSSFVKKGYFQTARGVLDQMFENFCAA), 664-698 (DIATYNVIIQGLGKMGRADLASAVLDRLTKQGGYL), 699-733 (DIVMYNTLINALGKATRLDEATQLFDHMKSNGINP), and 734-768 (DVVSYNTMIEVNSKAGKLKEAYKYLKAMLDAGCLP).

This sequence belongs to the PPR family. P subfamily.

The polypeptide is Pentatricopeptide repeat-containing protein At4g01570 (Arabidopsis thaliana (Mouse-ear cress)).